Reading from the N-terminus, the 732-residue chain is TIR domain-containing adapter molecule 1 (732 aa).

The TRIF-NTD stretch occupies residues 1-153; it reads MDNPGPSLRG…CSSDIKGDPS (153 aa). Residues 84-91 carry the TRAF6-binding motif; it reads EGPEEPPD. A disordered region spans residues 144–191; the sequence is CSSDIKGDPSGFQPLHSHQGSLQPPSASPAVTRSQPRPIDTPDWSWGH. Positions 159 to 178 are enriched in polar residues; sequence HSHQGSLQPPSASPAVTRSQ. The pLxIS motif motif lies at 206 to 209; sequence LEIS. Position 209 is a phosphoserine (Ser209). Residue Lys228 forms a Glycyl lysine isopeptide (Lys-Gly) (interchain with G-Cter in ubiquitin) linkage. 2 consecutive short sequence motifs (TRAF6-binding) follow at residues 247 to 254 and 296 to 306; these read QEPEEISW and HCPIECTELST. Residues 305-331 are compositionally biased toward polar residues; the sequence is STNSRSPLTSTTESVGKQWPITSQRSP. A disordered region spans residues 305-389; it reads STNSRSPLTS…TSTSPVLDHS (85 aa). The segment covering 345–359 has biased composition (low complexity); that stretch reads SSSPPAQPPSLQASP. Residues 395 to 534 enclose the TIR domain; the sequence is KFYNFVVIHA…KVANTFKTQK (140 aa). Positions 514–713 are sufficient to induce apoptosis; sequence WLDEHSPIFA…SSDDKTECSE (200 aa). Disordered regions lie at residues 603 to 679 and 696 to 732; these read TPSW…GPQP and MWGHTGAQSSDDKTECSENPCMGPLTDQGEPLLETPE. Composition is skewed to pro residues over residues 604–615 and 625–657; these read PSWPGCPQPIPS and PYSPQPPSFPQPPCFPQPPSFPQPPSFPLPPVS. A compositionally biased stretch (low complexity) spans 658-671; sequence SPQSQSFPSASSPA.

In terms of assembly, homodimer. Found in a multi-helicase-TICAM1 complex at least composed of DHX36, DDX1, DDX21 and TICAM1; this complex exists in resting cells with or without poly(I:C) RNA ligand stimulation. Interacts (via TIR domain) with DDX21 (via C-terminus). Interacts (via TIR domain) with DHX36 (via C-terminus). Interacts with AZI2 and IRF7. Interacts (when phosphorylated) with IRF3; following activation and phosphorylation on the pLxIS motif by TBK1, recruits IRF3. Interacts with TICAM2 in TLR4 recruitment. Interaction with PIAS4 inhibits the TICAM1-induced NF-kappa-B, IRF and IFNB1 activation. Interacts with IKBKB and IKBKE. Interaction with SARM1 blocks TICAM1-dependent transcription factor activation. Interacts with TRAF3. Interacts with TRAFD1. Interacts with UBQLN1 (via UBA domain). Interacts with TBK1, TRAF6 and RIPK1 and these interactions are enhanced in the presence of WDFY1. Interacts (via the TIR domain) with TLR3 in response to poly(I:C) and this interaction is enhanced in the presence of WDFY1. Interacts with TLR4 in response to poly(I:C) in a WDFY1-dependent manner. Interacts with WDFY1 in response to poly(I:C). Interacts with TRIM56. Interacts (via the TIR domain) with TLR5. Interacts with TRIM8. Interacts with TAX1BP1 and TRIM32; these interactions target TICAM1 to TAX1BP1-mediated selective autophagic degradation. Interacts with DDX50. Post-translationally, phosphorylated by TBK1. Following activation, phosphorylated by TBK1 at Ser-209 in the pLxIS motif. The phosphorylated pLxIS motif constitutes an IRF3-binding motif, leading to recruitment of the transcription factor IRF3 to induce type-I interferons and other cytokines. In terms of processing, polyubiquitinated at Lys-228 by TRIM38 with 'Lys-48'-linked chains, leading to proteasomal degradation. Polyubiquitinated with 'Lys-6'- and 'Lys-33'-linked chains in a TRIM8-dependent manner; ubiquitination disrupts the interaction with TBK1 and subsequent interferon production.

Its subcellular location is the cytoplasm. It is found in the cytosol. The protein resides in the cytoplasmic vesicle. The protein localises to the autophagosome. It localises to the mitochondrion. Functionally, involved in innate immunity against invading pathogens. Adapter used by TLR3, TLR4 (through TICAM2) and TLR5 to mediate NF-kappa-B and interferon-regulatory factor (IRF) activation, and to induce apoptosis. Ligand binding to these receptors results in TRIF recruitment through its TIR domain. Distinct protein-interaction motifs allow recruitment of the effector proteins TBK1, TRAF6 and RIPK1, which in turn, lead to the activation of transcription factors IRF3 and IRF7, NF-kappa-B and FADD respectively. Phosphorylation by TBK1 on the pLxIS motif leads to recruitment and subsequent activation of the transcription factor IRF3 to induce expression of type I interferon and exert a potent immunity against invading pathogens. Component of a multi-helicase-TICAM1 complex that acts as a cytoplasmic sensor of viral double-stranded RNA (dsRNA) and plays a role in the activation of a cascade of antiviral responses including the induction of pro-inflammatory cytokines. This Mus musculus (Mouse) protein is TIR domain-containing adapter molecule 1 (Ticam1).